The primary structure comprises 313 residues: Olfactory receptor 1J2 (313 aa).

The Extracellular portion of the chain corresponds to 1 to 25 (MSPENQSSVSEFLLLGLPIRPEQQA). The N-linked (GlcNAc...) asparagine glycan is linked to Asn-5. Residues 26–49 (VFFTLFLGMYLTTVLGNLLIMLLI) traverse the membrane as a helical segment. The Cytoplasmic portion of the chain corresponds to 50–57 (QLDSHLHT). The helical transmembrane segment at 58–79 (PMYFFLSHLALTDISFSSVTVP) threads the bilayer. Residues 80-100 (KMLMDMRTKYKSILYEECISQ) are Extracellular-facing. A disulfide bridge connects residues Cys-97 and Cys-189. The helical transmembrane segment at 101 to 120 (MYFFIFFTDLDSFLITSMAY) threads the bilayer. The Cytoplasmic segment spans residues 121–139 (DRYVAICHPLHYTVIMREE). The helical transmembrane segment at 140 to 158 (LCVFLVAVSWILSCASSLS) threads the bilayer. The Extracellular portion of the chain corresponds to 159–196 (HTLLLTRLSFCAANTIPHVFCDLAALLKLSCSDIFLNE). The helical transmembrane segment at 197-219 (LVMFTVGVVVITLPFMCILVSYG) threads the bilayer. At 220-236 (YIGATILRVPSTKGIHK) the chain is on the cytoplasmic side. A helical membrane pass occupies residues 237-259 (ALSTCGSHLSVVSLYYGSIFGQY). Over 260–272 (LFPTVSSSIDKDV) the chain is Extracellular. The chain crosses the membrane as a helical span at residues 273–292 (IVALMYTVVTPMLNPFIYSL). Residues 293 to 313 (RNRDMKEALGKLFSRATFFSW) are Cytoplasmic-facing.

The protein belongs to the G-protein coupled receptor 1 family.

The protein resides in the cell membrane. Odorant receptor. This is Olfactory receptor 1J2 (OR1J2) from Homo sapiens (Human).